Reading from the N-terminus, the 427-residue chain is Trigger factor (427 aa).

A PPIase FKBP-type domain is found at 163 to 248; sequence GDTVILDFEG…LHEIKTKEVP (86 aa).

The protein belongs to the FKBP-type PPIase family. Tig subfamily.

Its subcellular location is the cytoplasm. It carries out the reaction [protein]-peptidylproline (omega=180) = [protein]-peptidylproline (omega=0). Involved in protein export. Acts as a chaperone by maintaining the newly synthesized protein in an open conformation. Functions as a peptidyl-prolyl cis-trans isomerase. This Listeria innocua serovar 6a (strain ATCC BAA-680 / CLIP 11262) protein is Trigger factor.